Here is a 904-residue protein sequence, read N- to C-terminus: MQAAAAASFWLLCVLGTCPLARCGRAGVASLKGLERGKENRFLERQSIIPLRLIYRLGGEDETQHNQLDTRVRGDPGGPQLTHVDKASFRVDAFGTSFVLDVLLNHELLSSGYVERQIEHGGKVVENKGGEHCYYQGQIRGNPVSFVALSTCHGLHGMFYDGNHTYLIEPEENEKSQESSHCHSVYKSRQFEFPLDDLPSEFQRVNITPPQFILKPRLKRRKRQLLRFPRNVEEETKYIELMIVNDHLMFKKHRLSVVYTNTYAKSVVNMADVIYKDQLKTRIVLVAMETWAADNKFAISENPLITLREFMKYRRDFIKEKADAVHLFSGSQFESSRSGAAYIGGICSLLRGGGVNEFGKTDLMAVTLAQSLAHNVGIISDKRKLASGECKCEDTWSGCIMGDTGYYLPKKFTQCNVEEYHDFLNSGGGACLFNKPSKLLDPPECGNGFIETGEECDCGTPAECALEGAECCKKCTLTQDSQCSDGLCCKKCKFQPLGTVCREAVNDCDIREICSGNSSQCAPNVHKMDGYSCDGTQGICFGGRCKTRDRQCKYIWGQKVTASDRYCYEKLNIEGTEKGNCGKDKDTWTQCNKRDVLCGYLLCTNIGNIPRLGELDGEITSTLVVQQGRTLNCSGAHVKLEEDVDLGYVEDGTPCGPQMMCLEHRCLPVASFNFSTCSSSKAGTVCSGNGVCSNELKCVCNRHWTGADCGTHFPHNDDAKTGITLSGNGVAGTNIIIGIIAGTILVLALILGITAWGYKNYREQRQLPQGDYVKKPGDGDSFYSDFPPGGSTNSASSSKKRSNGLSHSWSERIPDTKHISDICENGRPRSNSWQGNMGGNKKKIRGKRFRPRSNSTETLSPAKSPSSSTGSIASSRKYPYPMPPLPDEGKTAGRQSARLWETSI.

Positions 1–23 are cleaved as a signal peptide; it reads MQAAAAASFWLLCVLGTCPLARC. Residues 24-223 constitute a propeptide that is removed on maturation; sequence GRAGVASLKG…LKPRLKRRKR (200 aa). Residues 24–734 are Extracellular-facing; sequence GRAGVASLKG…LSGNGVAGTN (711 aa). Asn-163 carries N-linked (GlcNAc...) asparagine glycosylation. In terms of domain architecture, Peptidase M12B spans 237–436; it reads KYIELMIVND…GGGACLFNKP (200 aa). 17 disulfides stabilise this stretch: Cys-347-Cys-431, Cys-390-Cys-415, Cys-392-Cys-399, Cys-445-Cys-475, Cys-456-Cys-472, Cys-458-Cys-464, Cys-471-Cys-492, Cys-483-Cys-489, Cys-488-Cys-514, Cys-501-Cys-521, Cys-508-Cys-540, Cys-533-Cys-545, Cys-552-Cys-603, Cys-567-Cys-633, Cys-581-Cys-591, Cys-598-Cys-661, and Cys-655-Cys-666. A Disintegrin domain is found at 442–529; that stretch reads PPECGNGFIE…QCAPNVHKMD (88 aa). N-linked (GlcNAc...) asparagine glycosylation is present at Asn-517. N-linked (GlcNAc...) asparagine glycosylation occurs at Asn-632. The N-linked (GlcNAc...) asparagine glycan is linked to Asn-673. Positions 673 to 710 constitute an EGF-like domain; it reads NFSTCSSSKAGTVCSGNGVCSNELKCVCNRHWTGADCG. Disulfide bonds link Cys-677/Cys-692, Cys-686/Cys-698, and Cys-700/Cys-709. A helical membrane pass occupies residues 735–755; the sequence is IIIGIIAGTILVLALILGITA. At 756 to 857 the chain is on the cytoplasmic side; it reads WGYKNYREQR…RFRPRSNSTE (102 aa). The disordered stretch occupies residues 769 to 904; the sequence is QGDYVKKPGD…QSARLWETSI (136 aa). Residues 789–808 show a composition bias toward low complexity; that stretch reads GGSTNSASSSKKRSNGLSHS. Phosphoserine is present on residues Ser-808, Lys-817, and Ser-832. Positions 809 to 827 are enriched in basic and acidic residues; it reads WSERIPDTKHISDICENGR. Residues 840 to 851 are compositionally biased toward basic residues; the sequence is NKKKIRGKRFRP. 5 positions are modified to phosphoserine: Ser-855, Ser-860, Ser-864, Ser-868, and Met-882. Positions 860–875 are enriched in low complexity; it reads SPAKSPSSSTGSIASS.

In terms of assembly, interacts with LGI1. Can bind to LGI4. Interacts with KCNA2, DLG2 and DLG4. Interacts with ADAM11. Interacts (via C-terminus) with YWHAB/14-3-3 beta. Interacts (via C-terminus) with YWHAZ/14-3-3 zeta. Post-translationally, the precursor is cleaved by a furin endopeptidase. Detected in juxtaparanodal zones in the central nervous system and at nerve terminal plexuses of basket cells in the cerebellum (at protein level). Expressed at high levels in the brain. Strongly expressed in cerebellar granule cells and hippocampus. In spinal cord, expression is restricted to gray matter.

The protein resides in the cell membrane. It localises to the cell projection. Its subcellular location is the axon. Probable ligand for integrin in the brain. This is a non catalytic metalloprotease-like protein. Involved in regulation of cell adhesion and spreading and in inhibition of cell proliferation. Neuronal receptor for LGI1. This is Disintegrin and metalloproteinase domain-containing protein 22 (Adam22) from Mus musculus (Mouse).